A 425-amino-acid polypeptide reads, in one-letter code: Proline iminopeptidase (425 aa).

The AB hydrolase-1 domain occupies 52 to 315 (PWLLYLQGGP…EFPALAWAQG (264 aa)). S146 (nucleophile) is an active-site residue. D351 is an active-site residue. Catalysis depends on H404, which acts as the Proton donor.

The protein belongs to the peptidase S33 family. Homotetramer.

The protein resides in the cytoplasm. It catalyses the reaction Release of N-terminal proline from a peptide.. In terms of biological role, higher activity toward long peptides. Acts on hydroxyproline beta-naphthylamide with almost as high an activity as on proline beta-naphthylamide. The sequence is that of Proline iminopeptidase (pip) from Aeromonas sobria.